A 381-amino-acid chain; its full sequence is 4-hydroxy-3-methylbut-2-en-1-yl diphosphate synthase (flavodoxin) (381 aa).

4 residues coordinate [4Fe-4S] cluster: Cys-273, Cys-276, Cys-308, and Glu-315.

This sequence belongs to the IspG family. Requires [4Fe-4S] cluster as cofactor.

The catalysed reaction is (2E)-4-hydroxy-3-methylbut-2-enyl diphosphate + oxidized [flavodoxin] + H2O + 2 H(+) = 2-C-methyl-D-erythritol 2,4-cyclic diphosphate + reduced [flavodoxin]. It functions in the pathway isoprenoid biosynthesis; isopentenyl diphosphate biosynthesis via DXP pathway; isopentenyl diphosphate from 1-deoxy-D-xylulose 5-phosphate: step 5/6. Converts 2C-methyl-D-erythritol 2,4-cyclodiphosphate (ME-2,4cPP) into 1-hydroxy-2-methyl-2-(E)-butenyl 4-diphosphate. The sequence is that of 4-hydroxy-3-methylbut-2-en-1-yl diphosphate synthase (flavodoxin) from Gluconobacter oxydans (strain 621H) (Gluconobacter suboxydans).